Reading from the N-terminus, the 205-residue chain is Proteasome subunit beta type-3 (205 aa).

The protein belongs to the peptidase T1B family. In terms of assembly, the 26S proteasome consists of a 20S proteasome core and two 19S regulatory subunits. The 20S proteasome core is composed of 28 subunits that are arranged in four stacked rings, resulting in a barrel-shaped structure. The two end rings are each formed by seven alpha subunits, and the two central rings are each formed by seven beta subunits. The catalytic chamber with the active sites is on the inside of the barrel.

The protein resides in the cytoplasm. It is found in the nucleus. In terms of biological role, non-catalytic component of the proteasome, a multicatalytic proteinase complex which is characterized by its ability to cleave peptides with Arg, Phe, Tyr, Leu, and Glu adjacent to the leaving group at neutral or slightly basic pH. The proteasome has an ATP-dependent proteolytic activity. This is Proteasome subunit beta type-3 (psmB3) from Dictyostelium discoideum (Social amoeba).